The sequence spans 335 residues: Mycobacterial beta-ketoacyl-[acyl-carrier-protein] synthase III (335 aa).

Residues C122 and H258 contribute to the active site. The ACP-binding stretch occupies residues 259-263 (QANSR). N289 is an active-site residue.

The protein belongs to the thiolase-like superfamily. FabH family. Homodimer.

The protein localises to the cytoplasm. It carries out the reaction malonyl-[ACP] + dodecanoyl-CoA + H(+) = 3-oxotetradecanoyl-[ACP] + CO2 + CoA. It functions in the pathway lipid metabolism; fatty acid biosynthesis. The protein operates within lipid metabolism; mycolic acid biosynthesis. Catalyzes the condensation reaction of fatty acid synthesis by the addition to an acyl acceptor of two carbons from malonyl-ACP. Catalyzes the first condensation reaction which initiates fatty acid synthesis and may therefore play a role in governing the total rate of fatty acid production. Possesses both acetoacetyl-ACP synthase and acetyl transacylase activities. Its substrate specificity determines the biosynthesis of branched-chain and/or straight-chain of fatty acids. The chain is Mycobacterial beta-ketoacyl-[acyl-carrier-protein] synthase III from Mycobacterium marinum (strain ATCC BAA-535 / M).